We begin with the raw amino-acid sequence, 408 residues long: uncharacterized protein (408 aa).

4Fe-4S ferredoxin-type domains are found at residues 42-72 (IPPI…MIYN), 78-107 (KLPV…MDKH), 122-151 (SNLI…RKEG), 151-181 (GKYV…VVDE), 212-241 (KIPH…NEKK), 233-265 (GEID…IYKP), 273-302 (ICYV…ISKE), and 304-333 (KLPY…VVKP). Positions 52, 55, 58, 62, 87, 90, 93, 97, 131, 134, 137, 141, 160, 163, 166, and 170 each coordinate [4Fe-4S] cluster. The [4Fe-4S] cluster site is built by C282, C285, C288, and C292.

This is an uncharacterized protein from Methanocaldococcus jannaschii (strain ATCC 43067 / DSM 2661 / JAL-1 / JCM 10045 / NBRC 100440) (Methanococcus jannaschii).